A 441-amino-acid polypeptide reads, in one-letter code: 4-hydroxybenzoate polyprenyltransferase, mitochondrial (441 aa).

Residues 1–95 (MLRKLTSNSS…TLGELVLRDY (95 aa)) constitute a mitochondrion transit peptide. 8 helical membrane passes run 129 to 149 (IGSW…APAG), 154 to 174 (LWTL…GCTI), 204 to 224 (AWFF…ELNW), 225 to 245 (YSIV…LMKR), 246 to 266 (ITHW…LLGW), 271 to 291 (GSVM…WTIV), 322 to 342 (LWLS…GMVC), and 378 to 398 (FISN…GTLY). The disordered stretch occupies residues 405-441 (AGKSSTTSSSSTSSSSSPSSGLLLAATNHHQPARQAS). Over residues 408–424 (SSTTSSSSTSSSSSPSS) the composition is skewed to low complexity. Polar residues predominate over residues 432-441 (NHHQPARQAS).

It belongs to the UbiA prenyltransferase family. Requires Mg(2+) as cofactor.

The protein resides in the mitochondrion inner membrane. The catalysed reaction is an all-trans-polyprenyl diphosphate + 4-hydroxybenzoate = a 4-hydroxy-3-(all-trans-polyprenyl)benzoate + diphosphate. The protein operates within cofactor biosynthesis; ubiquinone biosynthesis. Functionally, catalyzes the prenylation of para-hydroxybenzoate (PHB) with an all-trans polyprenyl group. Mediates the second step in the final reaction sequence of coenzyme Q (CoQ) biosynthesis, which is the condensation of the polyisoprenoid side chain with PHB, generating the first membrane-bound Q intermediate. This Aedes aegypti (Yellowfever mosquito) protein is 4-hydroxybenzoate polyprenyltransferase, mitochondrial.